Consider the following 253-residue polypeptide: Probable proteasome subunit alpha type-7 (253 aa).

Residue Ser104 is modified to Phosphoserine.

The protein belongs to the peptidase T1A family. As to quaternary structure, the 26S proteasome consists of a 20S proteasome core and two 19S regulatory subunits. The 20S proteasome core is composed of 28 subunits that are arranged in four stacked rings, resulting in a barrel-shaped structure. The two end rings are each formed by seven alpha subunits, and the two central rings are each formed by seven beta subunits. The catalytic chamber with the active sites is on the inside of the barrel.

It is found in the cytoplasm. It localises to the nucleus. The proteasome is a multicatalytic proteinase complex which is characterized by its ability to cleave peptides with Arg, Phe, Tyr, Leu, and Glu adjacent to the leaving group at neutral or slightly basic pH. The proteasome has an ATP-dependent proteolytic activity. The protein is Probable proteasome subunit alpha type-7 (pre10) of Schizosaccharomyces pombe (strain 972 / ATCC 24843) (Fission yeast).